The primary structure comprises 156 residues: IFN signaling evasion protein OPG029 (156 aa).

This sequence belongs to the orthopoxvirus OPG029 family. In terms of assembly, interacts with host TANK, TBKBP1 and AZI2; these interactions prevent interferon production. Interacts with host STAT2.

Functionally, prevents establishment of cellular antiviral state by blocking virus-induced phosphorylation and activation of interferon regulatory factors 3/IRF3 and 7/IRF7, transcription factors critical for the induction of interferons alpha and beta. This blockage is produced through the inhibition of host TBK1, by binding host TBK1 adapter proteins TBKBP1 and AZI2, thereby producing a strong inhibition of the phosphorylation and activation of IRF3 and IRF7. Also acts as an inhibitor of the cellular response to type I IFN by interacting with host STAT2. Mechanistically, exerts its inhibitory effect after host ISGF3 complex (composed of STAT1, STAT2 and IRF9) binding to the interferon stimulated response element (ISRE). This is IFN signaling evasion protein OPG029 (OPG029) from Variola virus (isolate Human/India/Ind3/1967) (VARV).